A 231-amino-acid chain; its full sequence is Orotidine 5'-phosphate decarboxylase (231 aa).

Substrate-binding positions include D11, K33, D60–T69, T117, R179, Q187, G207, and R208. The active-site Proton donor is K62.

The protein belongs to the OMP decarboxylase family. Type 1 subfamily. Homodimer.

The catalysed reaction is orotidine 5'-phosphate + H(+) = UMP + CO2. Its pathway is pyrimidine metabolism; UMP biosynthesis via de novo pathway; UMP from orotate: step 2/2. In terms of biological role, catalyzes the decarboxylation of orotidine 5'-monophosphate (OMP) to uridine 5'-monophosphate (UMP). In Ehrlichia chaffeensis (strain ATCC CRL-10679 / Arkansas), this protein is Orotidine 5'-phosphate decarboxylase.